The sequence spans 350 residues: Phenylalanine--tRNA ligase alpha subunit (350 aa).

Glutamate 271 is a Mg(2+) binding site.

It belongs to the class-II aminoacyl-tRNA synthetase family. Phe-tRNA synthetase alpha subunit type 1 subfamily. As to quaternary structure, tetramer of two alpha and two beta subunits. The cofactor is Mg(2+).

The protein localises to the cytoplasm. The enzyme catalyses tRNA(Phe) + L-phenylalanine + ATP = L-phenylalanyl-tRNA(Phe) + AMP + diphosphate + H(+). This is Phenylalanine--tRNA ligase alpha subunit from Acidovorax ebreus (strain TPSY) (Diaphorobacter sp. (strain TPSY)).